The chain runs to 309 residues: Taste receptor type 2 member 20 (309 aa).

At 1 to 6 (MMSFLH) the chain is on the extracellular side. Residues 7–27 (IVFSILVVVAFILGNFANGFI) traverse the membrane as a helical segment. Residues 28 to 46 (ALINFIAWVKRQKISSADQ) lie on the Cytoplasmic side of the membrane. A helical membrane pass occupies residues 47-67 (IIAALAVSRVGLLWVILLHWY). Residues 68-79 (STVLNPTSSNLK) are Extracellular-facing. The helical transmembrane segment at 80 to 100 (VIIFISNAWAVTNHFSIWLAT) threads the bilayer. The Cytoplasmic segment spans residues 101 to 125 (SLSIFYLLKIVNFSRLIFHHLKRKA). A helical membrane pass occupies residues 126-146 (KSVVLVIVLGSLFFLVCHLVM). At 147–178 (KNTYINVWTEECEGNVTWKIKLRNAMHLSNLT) the chain is on the extracellular side. A helical membrane pass occupies residues 179 to 199 (VAMLANLIPFTLTLISFLLLI). The Cytoplasmic portion of the chain corresponds to 200 to 229 (YSLCKHLKKMQLHGKGSQDPSTKIHIKALQ). Residues 230–250 (TVTSFLILLAIYFLCLITSFW) form a helical membrane-spanning segment. Topologically, residues 251 to 259 (NSKMRPKEI) are extracellular. The helical transmembrane segment at 260 to 280 (VLMLCQAFGIIYPSFHSFILI) threads the bilayer. Residues 281-309 (WGNKTLKQTFLSVLWQVTCWAKGQNQSTP) are Cytoplasmic-facing.

The protein belongs to the G-protein coupled receptor T2R family.

The protein localises to the membrane. Its function is as follows. Receptor that may play a role in the perception of bitterness and is gustducin-linked. May play a role in sensing the chemical composition of the gastrointestinal content. The activity of this receptor may stimulate alpha gustducin, mediate PLC-beta-2 activation and lead to the gating of TRPM5. In Pan paniscus (Pygmy chimpanzee), this protein is Taste receptor type 2 member 20 (TAS2R20).